The following is a 706-amino-acid chain: Gamma-adducin (706 aa).

A compositionally biased stretch (low complexity) spans 1 to 11 (MSSDTSPAVVT). The disordered stretch occupies residues 1–23 (MSSDTSPAVVTTPPPPSMPHKER). Position 2 is an N-acetylserine (Ser2). Phosphoserine occurs at positions 31, 42, 64, 402, 414, 423, 442, and 461. 4 disordered regions span residues 471-495 (AEDSSKVSSGTPIKIEDPNQFVPLN), 534-556 (PPSTMQFDDDDQGPPAPPNPFSH), 574-610 (QGLDDAEQGSLSDDAASVSQIQSQTQSPQSVPERLEE), and 651-706 (TSTT…KVEA). A Glycyl lysine isopeptide (Lys-Gly) (interchain with G-Cter in SUMO2) cross-link involves residue Lys484. Ser583, Ser585, and Ser590 each carry phosphoserine. 2 stretches are compositionally biased toward low complexity: residues 590–605 (SVSQIQSQTQSPQSVP) and 651–662 (TSTTIENIEITI). Residues Ser673, Ser677, Ser679, Ser681, and Ser683 each carry the phosphoserine modification. Basic residues predominate over residues 682–706 (PSKKKKKFRTPSFLKKNKKKEKVEA). Residues 684–701 (KKKKKFRTPSFLKKNKKK) form an interaction with calmodulin region.

Belongs to the aldolase class II family. Adducin subfamily. In terms of assembly, heterodimer of an alpha and a gamma subunit. Post-translationally, sumoylated. Proteolytically cleaved by asparagine endopeptidase (AEP) into 2 fragments. Overexpression of the 1-357 fragment induces neuronal apoptosis, and overexpression of either 1-357 or 358-706 fragment increases the degeneration of dendritic spines. Overexpression of the 1-357 fragment impairs neurite outgrowth by downregulating the expression of Rac2, and induces synaptic dysfunction and cognitive impairments in tau P301S transgenic mice, a mouse model for Alzheimer disease (AD). As to expression, cleavage fragment 1-357 is expressed in the brain and the expression increases with age (at protein level). The fragment is expressed in the cortex, hippocampal CA1 region and hippocampal dentate gyrus in tau P301S transgenic mice, a mouse model for Alzheimer disease (AD) (at protein level). The fragment is only weakly expressed in non-transgenic mouse brain sections (at protein level).

It is found in the cytoplasm. Its subcellular location is the cytoskeleton. It localises to the cell membrane. Membrane-cytoskeleton-associated protein that promotes the assembly of the spectrin-actin network. Plays a role in actin filament capping. Binds to calmodulin. Involved in myogenic reactivity of the renal afferent arteriole (Af-art), renal interlobular arteries and middle cerebral artery (MCA) to increased perfusion pressure. Involved in regulation of potassium channels in the vascular smooth muscle cells (VSMCs) of the Af-art and MCA ex vivo. Involved in regulation of glomerular capillary pressure, glomerular filtration rate (GFR) and glomerular nephrin expression in response to hypertension. Involved in renal blood flow (RBF) autoregulation. Plays a role in podocyte structure and function. Regulates globular monomer actin (G-actin) and filamentous polymer actin (F-actin) ratios in the primary podocytes affecting actin cytoskeleton organization. Regulates expression of synaptopodin, RhoA, Rac1 and CDC42 in the renal cortex and the primary podocytes. Regulates expression of nephrin in the glomeruli and in the primary podocytes, expression of nephrin and podocinin in the renal cortex, and expression of focal adhesion proteins integrin alpha-3 and integrin beta-1 in the glomeruli. Involved in cell migration and cell adhesion of podocytes, and in podocyte foot process effacement. Regulates expression of profibrotics markers MMP2, MMP9, TGF beta-1, tubular tight junction protein E-cadherin, and mesenchymal markers vimentin and alpha-SMA. Promotes the growth of neurites. This Mus musculus (Mouse) protein is Gamma-adducin (Add3).